The chain runs to 324 residues: mRNA decay activator protein ZFP36 (324 aa).

A necessary for nuclear export region spans residues 1-15 (MDLAAIYKSLLSLSP). Residues 1-98 (MDLAAIYKSL…PTSPTATPTT (98 aa)) are necessary and sufficient for the association with mRNA decay enzymes and mRNA decay activation. Necessary for localization of ARE-containing mRNAs to processing bodies (PBs) regions lie at residues 1–172 (MDLA…DLAA) and 98–324 (TSSR…SVSE). Low complexity predominate over residues 15-46 (PELPSDLGETESSTSWASSGPWSLSSSDSSLP). The disordered stretch occupies residues 15 to 50 (PELPSDLGETESSTSWASSGPWSLSSSDSSLPEVAA). Serine 58 carries the post-translational modification Phosphoserine; by MAPKAPK2. Serine 64 carries the post-translational modification Phosphoserine. One copy of the P-P-P-P-G repeat lies at 69–73 (PPPPG). Positions 76 to 100 (PLAPRPSSDWSPSPTSPTATPTTSS) are disordered. Serine 86 and serine 88 each carry phosphoserine. The residue at position 90 (threonine 90) is a Phosphothreonine. Serine 91 carries the post-translational modification Phosphoserine. Positions 93 to 166 (TATPTTSSRY…GSRCHFIHNP (74 aa)) are necessary for nuclear localization. Residues 95-171 (TPTTSSRYKT…FIHNPSEDLA (77 aa)) are necessary for RNA-binding. 2 C3H1-type zinc fingers span residues 101 to 129 (RYKT…HGLG) and 139 to 167 (KYKT…HNPS). The interval 101–192 (RYKTELCRTF…ISFSGLPSGR (92 aa)) is necessary for interaction with PABPN1. Phosphoserine is present on serine 167. Residues 172–324 (APGHPHVLRQ…PIFNRISVSE (153 aa)) are necessary for mRNA decay activation. Serine 184 is subject to Phosphoserine; by MAPKAPK2. Disordered stretches follow at residues 185–227 (FSGL…LLLS) and 270–324 (PSAH…SVSE). The residue at position 195 (serine 195) is a Phosphoserine. A P-P-P-P-G repeat occupies 196 to 200 (PPPAS). The segment covering 204–214 (PSVSSWSFSPS) has biased composition (low complexity). Phosphoserine is present on serine 216. Residues 218–222 (PPPPG) form a P-P-P-P-G repeat. Serine 227 is subject to Phosphoserine; by MAPK1; in vitro. Phosphoserine occurs at positions 274, 294, and 321. The interval 310 to 324 (APRRLPIFNRISVSE) is interaction with CNOT1.

As to quaternary structure, associates with cytoplasmic CCR4-NOT and PAN2-PAN3 deadenylase complexes to trigger ARE-containing mRNA deadenylation and decay processes. Part of a mRNA decay activation complex at least composed of poly(A)-specific exoribonucleases CNOT6, EXOSC2 and XRN1 and mRNA-decapping enzymes DCP1A and DCP2. Associates with the RNA exosome complex. Interacts (via phosphorylated form) with 14-3-3 proteins; these interactions promote exclusion of ZFP36 from cytoplasmic stress granules in response to arsenite treatment in a MAPKAPK2-dependent manner and does not prevent CCR4-NOT deadenylase complex recruitment or ZFP36-induced ARE-containing mRNA deadenylation and decay processes. Interacts with 14-3-3 proteins; these interactions occur in response to rapamycin in an Akt-dependent manner. Interacts with AGO2 and AGO4. Interacts (via C-terminus) with CNOT1; this interaction occurs in a RNA-independent manner and induces mRNA deadenylation. Interacts (via N-terminus) with CNOT6. Interacts with CNOT6L. Interacts (via C-terminus) with CNOT7; this interaction occurs in a RNA-independent manner, induces mRNA deadenylation and is inhibited in a phosphorylation MAPKAPK2-dependent manner. Interacts (via unphosphorylated form) with CNOT8; this interaction occurs in a RNA-independent manner and is inhibited in a phosphorylation MAPKAPK2-dependent manner. Interacts with DCP1A. Interacts (via N-terminus) with DCP2. Interacts with EDC3. Interacts (via N-terminus) with EXOSC2. Interacts with heat shock 70 kDa proteins. Interacts with KHSRP; this interaction increases upon cytokine-induced treatment. Interacts with MAP3K4; this interaction enhances the association with SH3KBP1/CIN85. Interacts with MAPKAPK2; this interaction occurs upon skeletal muscle satellite cell activation. Interacts with NCL. Interacts with NUP214; this interaction increases upon lipopolysaccharide (LPS) stimulation. Interacts with PABPC1; this interaction occurs in a RNA-dependent manner. Interacts (via hypophosphorylated form) with PABPN1 (via RRM domain and C-terminal arginine-rich region); this interaction occurs in the nucleus in a RNA-independent manner, decreases in presence of single-stranded poly(A) RNA-oligomer and in a p38 MAPK-dependent-manner and inhibits nuclear poly(A) tail synthesis. Interacts with PAN2. Interacts (via C3H1-type zinc finger domains) with PKM. Interacts (via C3H1-type zinc finger domains) with nuclear RNA poly(A) polymerase. Interacts with PPP2CA; this interaction occurs in LPS-stimulated cells and induces ZFP36 dephosphorylation, and hence may promote ARE-containing mRNAs decay. Interacts (via C-terminus) with PRR5L (via C-terminus); this interaction may accelerate ZFP36-mediated mRNA decay during stress. Interacts (via C-terminus) with SFN; this interaction occurs in a phosphorylation-dependent manner. Interacts (via extreme C-terminal region) with SH3KBP1/CIN85 (via SH3 domains); this interaction enhances MAP3K4-induced phosphorylation of ZFP36 at Ser-64 and Ser-91 and does not alter neither ZFP36 binding to ARE-containing transcripts nor TNF-alpha mRNA decay. Interacts with XRN1. Interacts (via C-terminus and Ser-184 phosphorylated form) with YWHAB; this interaction occurs in a p38/MAPKAPK2-dependent manner, increases cytoplasmic localization of ZFP36 and protects ZFP36 from Ser-184 dephosphorylation by serine/threonine phosphatase 2A, and hence may be crucial for stabilizing ARE-containing mRNAs. Interacts (via phosphorylated form) with YWHAE. Interacts (via C-terminus) with YWHAG; this interaction occurs in a phosphorylation-dependent manner. Interacts with YWHAH; this interaction occurs in a phosphorylation-dependent manner. Interacts with YWHAQ; this interaction occurs in a phosphorylation-dependent manner. Interacts with (via C-terminus) YWHAZ; this interaction occurs in a phosphorylation-dependent manner. Does not interact with SH3KBP1. Interacts (via P-P-P-P-G repeats) with GIGYF2; the interaction is direct. In terms of processing, phosphorylated. Phosphorylation at serine and/or threonine residues occurs in a p38 MAPK- and MAPKAPK2-dependent manner. Phosphorylated by MAPKAPK2 at Ser-58 and Ser-184; phosphorylation increases its stability and cytoplasmic localization, promotes binding to 14-3-3 adapter proteins and inhibits the recruitment of cytoplasmic CCR4-NOT and PAN2-PAN3 deadenylase complexes to the mRNA decay machinery, thereby inhibiting ZFP36-induced ARE-containing mRNA deadenylation and decay processes. Phosphorylation by MAPKAPK2 does not impair ARE-containing RNA-binding. Phosphorylated in a MAPKAPK2- and p38 MAPK-dependent manner upon skeletal muscle satellite cell activation; this phosphorylation inhibits ZFP36-mediated mRNA decay activity, and hence stabilizes MYOD1 mRNA. Phosphorylated by MAPK1 upon mitogen stimulation. Phosphorylated at Ser-64 and Ser-91; these phosphorylations increase in a SH3KBP1-dependent manner. Phosphorylated at serine and threonine residues in a pyruvate kinase PKM- and p38 MAPK-dependent manner. Phosphorylation at Ser-58 may participate in the PKM-mediated degradation of ZFP36 in a p38 MAPK-dependent manner. Dephosphorylated by serine/threonine phosphatase 2A at Ser-184. Post-translationally, ubiquitinated; pyruvate kinase (PKM)-dependent ubiquitination leads to proteasomal degradation through a p38 MAPK signaling pathway.

It localises to the nucleus. It is found in the cytoplasm. The protein resides in the cytoplasmic granule. The protein localises to the P-body. Functionally, zinc-finger RNA-binding protein that destabilizes numerous cytoplasmic AU-rich element (ARE)-containing mRNA transcripts by promoting their poly(A) tail removal or deadenylation, and hence provide a mechanism for attenuating protein synthesis. Acts as an 3'-untranslated region (UTR) ARE mRNA-binding adapter protein to communicate signaling events to the mRNA decay machinery. Recruits deadenylase CNOT7 (and probably the CCR4-NOT complex) via association with CNOT1, and hence promotes ARE-mediated mRNA deadenylation. Also functions by recruiting components of the cytoplasmic RNA decay machinery to the bound ARE-containing mRNAs. Self regulates by destabilizing its own mRNA. Binds to 3'-UTR ARE of numerous mRNAs. Also binds to ARE of its own mRNA. Plays a role in anti-inflammatory responses; suppresses tumor necrosis factor (TNF)-alpha production by stimulating ARE-mediated TNF-alpha mRNA decay and several other inflammatory ARE-containing mRNAs in interferon (IFN)- and/or lipopolysaccharide (LPS)-induced macrophages. Also plays a role in the regulation of dendritic cell maturation at the post-transcriptional level, and hence operates as part of a negative feedback loop to limit the inflammatory response. Promotes ARE-mediated mRNA decay of hypoxia-inducible factor HIF1A mRNA during the response of endothelial cells to hypoxia. Positively regulates early adipogenesis of preadipocytes by promoting ARE-mediated mRNA decay of immediate early genes (IEGs). Negatively regulates hematopoietic/erythroid cell differentiation by promoting ARE-mediated mRNA decay of the transcription factor STAT5B mRNA. Plays a role in maintaining skeletal muscle satellite cell quiescence by promoting ARE-mediated mRNA decay of the myogenic determination factor MYOD1 mRNA. Also associates with and regulates the expression of non-ARE-containing target mRNAs at the post-transcriptional level, such as MHC class I mRNAs. Participates in association with argonaute RISC catalytic components in the ARE-mediated mRNA decay mechanism; assists microRNA (miRNA) targeting ARE-containing mRNAs. May also play a role in the regulation of cytoplasmic mRNA decapping; enhances decapping of ARE-containing RNAs, in vitro. Involved in the delivery of target ARE-mRNAs to processing bodies (PBs). In addition to its cytosolic mRNA-decay function, affects nuclear pre-mRNA processing. Negatively regulates nuclear poly(A)-binding protein PABPN1-stimulated polyadenylation activity on ARE-containing pre-mRNA during LPS-stimulated macrophages. Also involved in the regulation of stress granule (SG) and P-body (PB) formation and fusion. Plays a role in the regulation of keratinocyte proliferation, differentiation and apoptosis. Plays a role as a tumor suppressor by inhibiting cell proliferation in breast cancer cells. The protein is mRNA decay activator protein ZFP36 of Bos taurus (Bovine).